Here is a 356-residue protein sequence, read N- to C-terminus: Glycerophosphodiester phosphodiesterase (356 aa).

An N-terminal signal peptide occupies residues 1 to 20 (MRGTYCVTLWGGVFAALVAG). Residue C21 is the site of N-palmitoyl cysteine attachment. C21 carries S-diacylglycerol cysteine lipidation. Residues 25–314 (RMIVAYRGAA…CHVHTVRKET (290 aa)) form the GP-PDE domain.

Belongs to the glycerophosphoryl diester phosphodiesterase family. Post-translationally, palmitoylated upon expression of a fusion protein with first 40 residues fused to PhoA in E.coli.

The protein localises to the cell inner membrane. It carries out the reaction a sn-glycero-3-phosphodiester + H2O = an alcohol + sn-glycerol 3-phosphate + H(+). In terms of biological role, glycerophosphoryl diester phosphodiesterase hydrolyzes deacylated phospholipids to G3P and the corresponding alcohols. Binds human IgA, IgD and the Fc portion of IgG but not IgM, which may contribute to evasion of the human immune system. The polypeptide is Glycerophosphodiester phosphodiesterase (glpQ) (Treponema pallidum (strain Nichols)).